Here is a 181-residue protein sequence, read N- to C-terminus: Inner membrane-spanning protein YciB (181 aa).

Helical transmembrane passes span 8-28 (FPII…ATAA), 53-73 (ITLI…NAIF), 76-96 (WKPT…HFFG), 121-141 (LSWA…VYNF), and 149-169 (FKLF…AFYI).

The protein belongs to the YciB family.

It is found in the cell inner membrane. Its function is as follows. Plays a role in cell envelope biogenesis, maintenance of cell envelope integrity and membrane homeostasis. The protein is Inner membrane-spanning protein YciB of Coxiella burnetii (strain CbuK_Q154) (Coxiella burnetii (strain Q154)).